We begin with the raw amino-acid sequence, 292 residues long: Cholesterol ring-cleaving hydrolase IpdA subunit (292 aa).

The protein belongs to the 3-oxoacid CoA-transferase subunit A family. In terms of assembly, heterotetramer composed of 2 IpdA subunits and 2 IpdB subunits.

It catalyses the reaction (3E)-2-(2-carboxylatoethyl)-3-methyl-6-oxocyclohex-1-ene-1-carboxyl-CoA + H2O = 6-methyl-3,7-dioxodecanedioyl-CoA. Its pathway is steroid metabolism; cholesterol degradation. Involved in the final steps of cholesterol and steroid degradation. Opens the last steroid ring of cholesterol by catalyzing the hydrolysis of (3E)-2-(2-carboxylatoethyl)-3-methyl-6-oxocyclohex-1-ene-1-carboxyl-CoA (COCHEA-CoA) to 6-methyl-3,7-dioxodecanedioyl-CoA (MeDODA-CoA). In Mycobacterium tuberculosis (strain CDC 1551 / Oshkosh), this protein is Cholesterol ring-cleaving hydrolase IpdA subunit.